We begin with the raw amino-acid sequence, 275 residues long: Small ribosomal subunit protein uS2 (275 aa).

The disordered stretch occupies residues 226-275 (AAAPNSASVREEEFSAEAGDEGKGRRAPAKKATEKKADAPAAAPEAPAAE). A compositionally biased stretch (low complexity) spans 264-275 (APAAAPEAPAAE).

This sequence belongs to the universal ribosomal protein uS2 family.

The protein is Small ribosomal subunit protein uS2 of Xanthomonas campestris pv. campestris (strain 8004).